The primary structure comprises 872 residues: Leucine--tRNA ligase (872 aa).

The 'HIGH' region motif lies at Pro-42 to His-52. Positions Thr-634 to Ser-638 match the 'KMSKS' region motif. Residue Lys-637 participates in ATP binding.

Belongs to the class-I aminoacyl-tRNA synthetase family.

It localises to the cytoplasm. The catalysed reaction is tRNA(Leu) + L-leucine + ATP = L-leucyl-tRNA(Leu) + AMP + diphosphate. The sequence is that of Leucine--tRNA ligase from Nostoc sp. (strain PCC 7120 / SAG 25.82 / UTEX 2576).